Consider the following 1393-residue polypeptide: Protein strawberry notch homolog 1 (1393 aa).

The interval 129-148 (STRPSVSAPTVRNAMTSAPS) is disordered. The residue at position 148 (Ser-148) is a Phosphoserine. Residue Lys-149 is modified to N6-acetyllysine. Phosphoserine occurs at positions 162 and 214. Residue Lys-413 is modified to N6-acetyllysine. The tract at residues 687–840 (APSNNSSPRD…ANSNTNSNSS (154 aa)) is disordered. A phosphoserine mark is found at Ser-692, Ser-693, and Ser-697. The span at 697 to 716 (SPCKENKIKKRKGEEITREA) shows a compositional bias: basic and acidic residues. The span at 733–747 (SGSESDASDNEESDY) shows a compositional bias: acidic residues. Phosphoserine occurs at positions 754, 755, and 768. A compositionally biased stretch (acidic residues) spans 756–775 (GDDDDFNPFLDESNEDDEND). A compositionally biased stretch (basic residues) spans 781-793 (KDHKKNKEKKKKK). Phosphoserine is present on residues Ser-794 and Ser-815. The segment covering 824-840 (PAPNSTPANSNTNSNSS) has biased composition (low complexity). Positions 843–870 (TSQDAVERAQQMKKDLLDKLEKLAEDLP) form a coiled coil. Lys-1222 is modified (N6-acetyllysine). Ser-1386 bears the Phosphoserine mark.

Belongs to the SBNO family.

Its subcellular location is the nucleus. Functionally, plays a crucial role in the regulation of neural stem cells (NSCs) proliferation. Enhances the phosphorylation of GSK3B through the PI3K-Akt signaling pathway, thereby upregulating the Wnt/beta-catenin signaling pathway and promoting the proliferation of NSCs. Improves ischemic stroke recovery while inhibiting neuroinflammation through small extracellular vesicles (sEVs)-mediated mechanism. Enhances the secretion of sEVs from NSCs, which in turn inhibit both the MAPK and NF-kappaB pathways in microglia. This inhibition suppresses the pro-inflammatory M1 polarization of microglia, promoting a shift towards the M2 anti-inflammatory phenotype, which is beneficial for reducing neuroinflammation. This Homo sapiens (Human) protein is Protein strawberry notch homolog 1 (SBNO1).